We begin with the raw amino-acid sequence, 1024 residues long: Beta-galactosidase (1024 aa).

Asparagine 103 and aspartate 202 together coordinate substrate. Residue aspartate 202 participates in Na(+) binding. Residues glutamate 417, histidine 419, and glutamate 462 each coordinate Mg(2+). Residues glutamate 462 and 538–541 (EYAH) each bind substrate. Glutamate 462 serves as the catalytic Proton donor. Glutamate 538 functions as the Nucleophile in the catalytic mechanism. Asparagine 598 contacts Mg(2+). 2 residues coordinate Na(+): phenylalanine 602 and asparagine 605. Substrate-binding residues include asparagine 605 and tryptophan 1000.

The protein belongs to the glycosyl hydrolase 2 family. Homotetramer. The cofactor is Mg(2+). It depends on Na(+) as a cofactor.

It carries out the reaction Hydrolysis of terminal non-reducing beta-D-galactose residues in beta-D-galactosides.. The chain is Beta-galactosidase from Shigella sonnei (strain Ss046).